The primary structure comprises 516 residues: (R)-citramalate synthase CimA (516 aa).

Residues 8–269 enclose the Pyruvate carboxyltransferase domain; the sequence is LEILDVTLRD…KTNINEIAIT (262 aa). The active-site Proton donor is R16. Pyruvate-binding positions include 16 to 17 and Y144; that span reads RD. D17 contacts Mn(2+). The Proton acceptor role is filled by E146. T179 provides a ligand contact to pyruvate. 2 residues coordinate Mn(2+): H207 and H209.

This sequence belongs to the alpha-IPM synthase/homocitrate synthase family. Homodimer. Mn(2+) serves as cofactor.

The catalysed reaction is pyruvate + acetyl-CoA + H2O = (3R)-citramalate + CoA + H(+). The protein operates within amino-acid biosynthesis; L-isoleucine biosynthesis; 2-oxobutanoate from pyruvate: step 1/3. With respect to regulation, regulated by the end-product isoleucine via a feedback inhibition. The binding of isoleucine has inhibitory effects on the binding of both pyruvate and acetyl-CoA. May act via conformational change of the dimer interface of the regulatory domain, leading to inhibition of the catalytic reaction. Its function is as follows. Catalyzes the condensation of pyruvate and acetyl-coenzyme A to form (R)-citramalate. Shows strict substrate specificity for pyruvate. Cannot use alpha-ketoisovalerate, alpha-ketobutyrate, alpha-ketoisocaproate, alpha-ketoglutarate or glyoxylate. The protein is (R)-citramalate synthase CimA of Leptospira interrogans serogroup Icterohaemorrhagiae serovar Lai (strain 56601).